The primary structure comprises 356 residues: Guanine nucleotide-binding protein alpha-17 subunit (356 aa).

A lipid anchor (N-myristoyl glycine) is attached at Gly-2. A lipid anchor (S-palmitoyl cysteine) is attached at Cys-4. Residues 32 to 356 (SIVKLLLLGA…QKNLQKAGMM (325 aa)) form the G-alpha domain. A G1 motif region spans residues 35–48 (KLLLLGAGECGKST). Residues 40 to 47 (GAGECGKS), 177 to 183 (LYSRVAT), 202 to 206 (DVGGQ), 271 to 274 (NKKD), and Ala-328 each bind GTP. Mg(2+) is bound by residues Ser-47 and Thr-183. Residues 175-183 (DILYSRVAT) are G2 motif. Residues 198–207 (FRVFDVGGQR) form a G3 motif region. Positions 267 to 274 (ILFMNKKD) are G4 motif. A G5 motif region spans residues 326-331 (TCATDT).

This sequence belongs to the G-alpha family. As to quaternary structure, g proteins are composed of 3 units; alpha, beta and gamma. The alpha chain contains the guanine nucleotide binding site.

The protein localises to the cell projection. It localises to the cilium. The protein resides in the dendrite. In terms of biological role, guanine nucleotide-binding proteins (G proteins) are involved as modulators or transducers in various transmembrane signaling systems. This specific G-alpha subunit plays an important role in olfaction and in cilia morphogenesis. Involved in chemotactic responses to attractants diacetyl, pyrazine, 2,4,5-trimethylthiazole, benzaldehyde, isoamyl alcohol, butanone and 2,3-pentanedione. Displays a redundant function with gpa-3 in chemotactic responses. Involved in avoidance responses to copper, sodium dodecyl sulfate and linoleic acid. Involved in osmotic avoidance and mechanosensory responses. Involved in specifying fan-like morphology of cilia of head sensory neurons AWC. This chain is Guanine nucleotide-binding protein alpha-17 subunit (odr-3), found in Caenorhabditis briggsae.